The primary structure comprises 183 residues: Guanylate kinase (183 aa).

One can recognise a Guanylate kinase-like domain in the interval 4–182; it reads GRVVVLTGPS…AITALEAAIF (179 aa). 11–18 serves as a coordination point for ATP; sequence GPSGVGKG.

It belongs to the guanylate kinase family.

The protein resides in the cytoplasm. It carries out the reaction GMP + ATP = GDP + ADP. It catalyses the reaction dZMP + ATP = dZDP + ADP. It functions in the pathway purine metabolism. In terms of biological role, essential for recycling GMP and indirectly, cGMP. (Microbial infection) Catalyzes the phosphorylation of dZMP to dZDP, when the bacterium is infected by a phage that produces the substrate for the synthesis of dZTP (2- amino-2'-deoxyadenosine 5'-triphosphate), which is then used by the phage as a DNA polymerase substrate. The polypeptide is Guanylate kinase (Synechococcus sp. (strain ATCC 27144 / PCC 6301 / SAUG 1402/1) (Anacystis nidulans)).